The chain runs to 393 residues: Formate-dependent phosphoribosylglycinamide formyltransferase (393 aa).

N(1)-(5-phospho-beta-D-ribosyl)glycinamide contacts are provided by residues 22–23 and Glu82; that span reads EL. ATP contacts are provided by residues Arg114, Lys155, 160–165, 195–198, and Glu203; these read SSGKGQ and EGLV. An ATP-grasp domain is found at 119-308; it reads LLAAETLQLP…EFALHVRAFL (190 aa). 2 residues coordinate Mg(2+): Glu267 and Glu279. N(1)-(5-phospho-beta-D-ribosyl)glycinamide contacts are provided by residues Asp286, Lys355, and 362–363; that span reads RR.

It belongs to the PurK/PurT family. As to quaternary structure, homodimer.

It catalyses the reaction N(1)-(5-phospho-beta-D-ribosyl)glycinamide + formate + ATP = N(2)-formyl-N(1)-(5-phospho-beta-D-ribosyl)glycinamide + ADP + phosphate + H(+). It functions in the pathway purine metabolism; IMP biosynthesis via de novo pathway; N(2)-formyl-N(1)-(5-phospho-D-ribosyl)glycinamide from N(1)-(5-phospho-D-ribosyl)glycinamide (formate route): step 1/1. Functionally, involved in the de novo purine biosynthesis. Catalyzes the transfer of formate to 5-phospho-ribosyl-glycinamide (GAR), producing 5-phospho-ribosyl-N-formylglycinamide (FGAR). Formate is provided by PurU via hydrolysis of 10-formyl-tetrahydrofolate. In Yersinia enterocolitica serotype O:8 / biotype 1B (strain NCTC 13174 / 8081), this protein is Formate-dependent phosphoribosylglycinamide formyltransferase.